The sequence spans 782 residues: Cleavage and polyadenylation specificity factor subunit 2 (782 aa).

Over residues 407-416 (KKLEQSKEAD) the composition is skewed to basic and acidic residues. A disordered region spans residues 407–449 (KKLEQSKEADIDSSDESDIEEDIDQPSAHKTKHDLMMKGEGSR). The segment covering 417 to 430 (IDSSDESDIEEDID) has biased composition (acidic residues). Serine 419, serine 420, and serine 423 each carry phosphoserine. Positions 439–449 (HDLMMKGEGSR) are enriched in basic and acidic residues. A Phosphoserine modification is found at serine 660.

This sequence belongs to the metallo-beta-lactamase superfamily. RNA-metabolizing metallo-beta-lactamase-like family. CPSF2/YSH1 subfamily. Component of the cleavage and polyadenylation specificity factor (CPSF) complex, composed of CPSF1, CPSF2, CPSF3, CPSF4 and FIP1L1. Interacts with CPSF3, CSTF2 and SYMPK. Interacts with ZC3H3.

It is found in the nucleus. In terms of biological role, component of the cleavage and polyadenylation specificity factor (CPSF) complex that play a key role in pre-mRNA 3'-end formation, recognizing the AAUAAA signal sequence and interacting with poly(A) polymerase and other factors to bring about cleavage and poly(A) addition. Involved in the histone 3' end pre-mRNA processing. The protein is Cleavage and polyadenylation specificity factor subunit 2 (CPSF2) of Homo sapiens (Human).